A 173-amino-acid chain; its full sequence is CKLF-like MARVEL transmembrane domain-containing protein 8 (173 aa).

Residues 36 to 168 (FLRTLPGLLI…NTYFSFIAWR (133 aa)) form the MARVEL domain. The next 4 membrane-spanning stretches (helical) occupy residues 40-60 (LPGL…TLIA), 70-90 (FGWV…FLII), 105-125 (TTVG…AAIV), and 147-167 (FFAF…FIAW).

Belongs to the chemokine-like factor family.

It localises to the membrane. The chain is CKLF-like MARVEL transmembrane domain-containing protein 8 (CMTM8) from Bos taurus (Bovine).